Reading from the N-terminus, the 325-residue chain is GTP 3',8-cyclase (325 aa).

Positions 1-226 (MNTVNYLRIS…EGACYGNGPA (226 aa)) constitute a Radical SAM core domain. GTP is bound at residue Arg-8. Residues Cys-15 and Cys-19 each coordinate [4Fe-4S] cluster. Tyr-21 provides a ligand contact to S-adenosyl-L-methionine. Cys-22 is a binding site for [4Fe-4S] cluster. Arg-60 contacts GTP. Gly-64 is a binding site for S-adenosyl-L-methionine. Ser-91 contributes to the GTP binding site. Ser-115 contacts S-adenosyl-L-methionine. Lys-152 contributes to the GTP binding site. Met-186 contributes to the S-adenosyl-L-methionine binding site. Positions 249 and 252 each coordinate [4Fe-4S] cluster. Residue 254–256 (RVR) coordinates GTP. Residue Cys-266 coordinates [4Fe-4S] cluster.

The protein belongs to the radical SAM superfamily. MoaA family. In terms of assembly, monomer and homodimer. Requires [4Fe-4S] cluster as cofactor.

The catalysed reaction is GTP + AH2 + S-adenosyl-L-methionine = (8S)-3',8-cyclo-7,8-dihydroguanosine 5'-triphosphate + 5'-deoxyadenosine + L-methionine + A + H(+). The protein operates within cofactor biosynthesis; molybdopterin biosynthesis. Functionally, catalyzes the cyclization of GTP to (8S)-3',8-cyclo-7,8-dihydroguanosine 5'-triphosphate. This Gloeobacter violaceus (strain ATCC 29082 / PCC 7421) protein is GTP 3',8-cyclase.